The sequence spans 511 residues: Lysine--tRNA ligase 2 (511 aa).

Positions 1–22 are disordered; it reads MTMEINNTDPFEKMPLPDDSGL. Mg(2+) is bound by residues Glu-421 and Glu-428.

This sequence belongs to the class-II aminoacyl-tRNA synthetase family. As to quaternary structure, homodimer. The cofactor is Mg(2+).

It is found in the cytoplasm. The enzyme catalyses tRNA(Lys) + L-lysine + ATP = L-lysyl-tRNA(Lys) + AMP + diphosphate. This Methanosarcina mazei (strain ATCC BAA-159 / DSM 3647 / Goe1 / Go1 / JCM 11833 / OCM 88) (Methanosarcina frisia) protein is Lysine--tRNA ligase 2.